The chain runs to 362 residues: Apelin receptor A (362 aa).

Over 1–37 (METEGLSPMLYEDDYYYGNETGLQPCDETDWDFSYSL) the chain is Extracellular. A glycan (N-linked (GlcNAc...) asparagine) is linked at Asn-19. 2 disulfide bridges follow: Cys-26/Cys-286 and Cys-108/Cys-185. The chain crosses the membrane as a helical span at residues 38 to 58 (LPVFYMIVFVLGLSGNGVVIF). Over 59-76 (TVWKSKPKRRSADTYIGN) the chain is Cytoplasmic. Residues 77–97 (LALADLAFVVTLPLWATYTAL) form a helical membrane-spanning segment. The Extracellular portion of the chain corresponds to 98 to 110 (GFHWPFGSALCKL). Residues 111–131 (SSYLVLLNMFASVFCLTCLSF) form a helical membrane-spanning segment. The Cytoplasmic portion of the chain corresponds to 132-151 (DRYLAIVHSLSSAKLRSRSS). Residues 152–172 (IIVSLAVIWLFSGLLALPSLI) form a helical membrane-spanning segment. Residues 173–199 (LRDTRVEGNNTICDLDFSGVSSKENEN) are Extracellular-facing. N-linked (GlcNAc...) asparagine glycosylation occurs at Asn-181. Residues 200–220 (FWIGGLSILTTVPGFLLPLLL) form a helical membrane-spanning segment. Over 221-248 (MTIFYCFIGGKVTMHFQNLKKEEQKKKR) the chain is Cytoplasmic. The chain crosses the membrane as a helical span at residues 249 to 269 (LLKIIITLVVVFAICWLPFHI). Topologically, residues 270–296 (LKTIHFLDLMGFLELSCSTQNIIVSLH) are extracellular. A helical membrane pass occupies residues 297-317 (PYATCLAYVNSCLNPFLYAFF). Residues 318–362 (DLRFRSQCFFFFGFKKVLQGHLSNTSSSLSAQTQKSEIHSLATKV) are Cytoplasmic-facing.

It belongs to the G-protein coupled receptor 1 family. As to expression, expressed in all blood vessels including the posterior cardinal vein, intersomitic veins and the vitelline vein network. At the gastrula stage, exclusively expressed in the mesodermal layer and at the neurula stage in the lateral plate mesoderm. Larval expression is observed in the endothelium of the primary blood vessels and the forming heart.

It is found in the cell membrane. In terms of biological role, g protein-coupled receptor for peptide hormones apelin (apln) and apelin receptor early endogenous ligand (apela), that plays a role in the regulation of normal cardiovascular function and fluid homeostasis. When acting as apelin receptor, activates both G(i) protein pathway that inhibits adenylate cyclase activity, and the beta-arrestin pathway that promotes internalization of the receptor. Also functions as mechanoreceptor that is activated by pathological stimuli in a G-protein-independent fashion to induce beta-arrestin signaling, hence eliciting cardiac hypertrophy. However, the presence of apelin ligand blunts cardiac hypertrophic induction from APLNR/APJ on response to pathological stimuli. Plays a key role in early development such as gastrulation, blood vessels formation and heart morphogenesis by acting as a receptor for apela hormone, promoting endoderm and mesendoderm cell migration and regulating the migration of cells fated to become myocardial progenitors, respectively. Promotes angioblast migration toward the embryonic midline, i.e. the position of the future vessel formation, during vasculogenesis. May promote sinus venosus (SV)-derived endothelial cells migration into the developing heart to promote coronary blood vessel development. Required for cardiovascular development, particularly for intersomitic vein angiogenesis by acting as a receptor for apln hormone. Also plays a role in various processes in adults such as regulation of blood vessel formation, blood pressure, heart contractility, and heart failure. Acts upstream of the i/o type of G-alpha proteins in the differentiation of endothelium, erythroid cells, myeloid cells and cardiomyocytes. This Xenopus laevis (African clawed frog) protein is Apelin receptor A (aplnr-a).